The sequence spans 457 residues: Multidrug resistance protein MdtK (457 aa).

12 helical membrane-spanning segments follow: residues 11–31 (LLALAIPVILAQIAQTAMGFV), 53–73 (IWLPAILFGHGLLLALTPVIA), 93–113 (WLAGFVSVLIMLVLWNAGYII), 127–147 (AVGYLRALLWGAPGYLFFQVA), 160–180 (GMVMGFIGLLVNIPVNYIFIY), 189–209 (GGVGCGVATAAVYWVMFLAMV), 243–263 (LPIALALFFEVTLFAVVALLV), 276–296 (IALNFSSLMFVLPMSLAAAVT), 314–334 (AARTGLMVGVCMATLTAIFTV), 350–370 (VVTLAAHLMLLAAVYQISDSI), 387–407 (IFYITFTAYWVLGLPSGYILA), and 418–438 (PAGFWIGFIIGLTSAAIMMML).

It belongs to the multi antimicrobial extrusion (MATE) (TC 2.A.66.1) family. MdtK subfamily.

The protein resides in the cell inner membrane. Its function is as follows. Multidrug efflux pump that functions probably as a Na(+)/drug antiporter. This is Multidrug resistance protein MdtK from Escherichia coli O17:K52:H18 (strain UMN026 / ExPEC).